A 428-amino-acid chain; its full sequence is Beta-1,3-galactosyl-O-glycosyl-glycoprotein beta-1,6-N-acetylglucosaminyltransferase (428 aa).

Topologically, residues 1–9 (MLRNLFRRR) are cytoplasmic. The interval 5 to 9 (LFRRR) is mediates interaction with GOLPH3 and is necessary and sufficient for localization to the Golgi. A helical; Signal-anchor for type II membrane protein transmembrane segment spans residues 10 to 32 (LFSCPTKYYFMLLVLSLITFSVL). The tract at residues 33-121 (RIHQKPEFFS…EPLTKEEVGF (89 aa)) is stem region. Residues 33-428 (RIHQKPEFFS…RHKALENLEH (396 aa)) are Lumenal-facing. N-linked (GlcNAc...) asparagine glycosylation is found at Asn58 and Asn95. Cystine bridges form between Cys59-Cys413, Cys100-Cys172, Cys151-Cys199, and Cys372-Cys381. Residues 122–428 (PIAYSIVVHH…RHKALENLEH (307 aa)) form a catalytic region. UDP-N-acetyl-alpha-D-glucosamine-binding positions include 128-130 (VVH), 155-157 (DRK), and Tyr187. Residues Glu243, Asn250, Lys251, Arg254, Glu320, Lys341, and Tyr358 each contribute to the a glycoprotein site. Catalysis depends on Glu320, which acts as the Nucleophile. Arg378 and Lys401 together coordinate UDP-N-acetyl-alpha-D-glucosamine.

Belongs to the glycosyltransferase 14 family. In terms of assembly, interacts with GOLPH3; may control GCNT1 retention in the Golgi. Post-translationally, N-glycosylated. In terms of tissue distribution, expressed in kidney, liver, stomach, spleen, lung and brain.

The protein localises to the golgi apparatus membrane. The enzyme catalyses a 3-O-[beta-D-galactosyl-(1-&gt;3)-N-acetyl-alpha-D-galactosaminyl]-L-seryl-[protein] + UDP-N-acetyl-alpha-D-glucosamine = 3-O-{beta-D-galactosyl-(1-&gt;3)-[N-acetyl-beta-D-glucosaminyl-(1-&gt;6)]-N-acetyl-alpha-D-galactosaminyl}-L-seryl-[protein] + UDP + H(+). It catalyses the reaction a 3-O-[beta-D-galactosyl-(1-&gt;3)-N-acetyl-alpha-D-galactosaminyl]-L-threonyl-[protein] + UDP-N-acetyl-alpha-D-glucosamine = a 3-O-{beta-D-galactosyl-(1-&gt;3)-[N-acetyl-beta-D-glucosaminyl-(1-&gt;6)]-N-acetyl-alpha-D-galactosaminyl}-L-threonyl-[protein] + UDP + H(+). The catalysed reaction is a globoside GalGb4Cer + UDP-N-acetyl-alpha-D-glucosamine = a globoside GlcNAc-(beta1-&gt;6)-GalGb4Cer + UDP + H(+). It carries out the reaction a ganglioside GA1 + UDP-N-acetyl-alpha-D-glucosamine = a ganglioside beta-D-GlcNAc-(1-&gt;6)-GA1 + UDP + H(+). It functions in the pathway protein modification; protein glycosylation. Its pathway is glycolipid biosynthesis. Its activity is regulated as follows. Inactivated by thiol-reactive agents. Inhibited by free UDP. Functionally, glycosyltransferase that catalyzes the transfer of an N-acetylglucosamine (GlcNAc) moiety in beta1-6 linkage from UDP-GlcNAc onto mucin-type core 1 O-glycan to form the branched mucin-type core 2 O-glycan. The catalysis is metal ion-independent and occurs with inversion of the anomeric configuration of sugar donor. Selectively involved in synthesis of mucin-type core 2 O-glycans that serve as scaffolds for the display of selectin ligand sialyl Lewis X epitope by myeloid cells, with an impact on homeostasis and recruitment to inflammatory sites. Can also act on glycolipid substrates. Transfers GlcNAc moiety to GalGb4Cer globosides in a reaction step to the synthesis of stage-specific embryonic antigen 1 (SSEA-1) determinant. Can use Galbeta1-3GalNAcalpha1-R and Galbeta1-3GalNAcbeta1-R oligosaccharide derivatives as acceptor substrates. The sequence is that of Beta-1,3-galactosyl-O-glycosyl-glycoprotein beta-1,6-N-acetylglucosaminyltransferase (Gcnt1) from Mus musculus (Mouse).